Reading from the N-terminus, the 283-residue chain is Diaminopimelate epimerase (283 aa).

Asn13, Gln45, and Asn65 together coordinate substrate. Catalysis depends on Cys74, which acts as the Proton donor. Substrate is bound by residues 75–76, Asn156, Asn190, and 208–209; these read GN and ER. Cys217 acts as the Proton acceptor in catalysis. Residue 218–219 participates in substrate binding; the sequence is GS.

It belongs to the diaminopimelate epimerase family. In terms of assembly, homodimer.

The protein resides in the cytoplasm. The catalysed reaction is (2S,6S)-2,6-diaminopimelate = meso-2,6-diaminopimelate. Its pathway is amino-acid biosynthesis; L-lysine biosynthesis via DAP pathway; DL-2,6-diaminopimelate from LL-2,6-diaminopimelate: step 1/1. In terms of biological role, catalyzes the stereoinversion of LL-2,6-diaminopimelate (L,L-DAP) to meso-diaminopimelate (meso-DAP), a precursor of L-lysine and an essential component of the bacterial peptidoglycan. The polypeptide is Diaminopimelate epimerase (Bartonella tribocorum (strain CIP 105476 / IBS 506)).